We begin with the raw amino-acid sequence, 723 residues long: Lim and transglutaminase domain protein ltd-1 (723 aa).

Residues 5-72 (QHCNRCGKQV…SNHVPIAGPH (68 aa)) enclose the LIM zinc-binding domain.

It belongs to the transglutaminase-like superfamily. In terms of tissue distribution, expressed in the Y and U rectal epithelial cells, in marginal cells of the terminal bulb and isthmus of the pharynx (at protein level).

The protein localises to the cytoplasm. The protein resides in the cytoskeleton. Cytoskeleton-associated protein. May play a role in hypodermal cell development. The polypeptide is Lim and transglutaminase domain protein ltd-1 (Caenorhabditis elegans).